Here is a 154-residue protein sequence, read N- to C-terminus: MFTQANLFLLLLLAIALVAKNQSLLFAVGFLIVIKAVGLDQKLFPVIQSKGINWGVTVITIAVLVPIATGDIGFKQLGEAMKSYYAWIALGAGIAVALIAKNGLTLLENDPHITTALVIGTILAVALFGGVAVGPLIGAGIAYLAMQIVKIFTS.

Transmembrane regions (helical) follow at residues 14–34 (AIAL…LIVI), 54–74 (WGVT…DIGF), 87–107 (WIAL…LTLL), and 117–137 (LVIG…GPLI).

The protein belongs to the UPF0756 family.

The protein resides in the cell membrane. This Bacillus velezensis (strain DSM 23117 / BGSC 10A6 / LMG 26770 / FZB42) (Bacillus amyloliquefaciens subsp. plantarum) protein is UPF0756 membrane protein RBAM_026200.